The primary structure comprises 385 residues: Arginine biosynthesis bifunctional protein ArgJ (385 aa).

6 residues coordinate substrate: Thr-142, Lys-168, Thr-179, Glu-259, Asn-380, and Thr-385. The active-site Nucleophile is the Thr-179.

Belongs to the ArgJ family. In terms of assembly, heterotetramer of two alpha and two beta chains.

The protein localises to the cytoplasm. The enzyme catalyses N(2)-acetyl-L-ornithine + L-glutamate = N-acetyl-L-glutamate + L-ornithine. It catalyses the reaction L-glutamate + acetyl-CoA = N-acetyl-L-glutamate + CoA + H(+). It participates in amino-acid biosynthesis; L-arginine biosynthesis; L-ornithine and N-acetyl-L-glutamate from L-glutamate and N(2)-acetyl-L-ornithine (cyclic): step 1/1. Its pathway is amino-acid biosynthesis; L-arginine biosynthesis; N(2)-acetyl-L-ornithine from L-glutamate: step 1/4. Catalyzes two activities which are involved in the cyclic version of arginine biosynthesis: the synthesis of N-acetylglutamate from glutamate and acetyl-CoA as the acetyl donor, and of ornithine by transacetylation between N(2)-acetylornithine and glutamate. The polypeptide is Arginine biosynthesis bifunctional protein ArgJ (Leptospira interrogans serogroup Icterohaemorrhagiae serovar copenhageni (strain Fiocruz L1-130)).